Reading from the N-terminus, the 271-residue chain is NAD kinase (271 aa).

D52 functions as the Proton acceptor in the catalytic mechanism. Residues 52-53 (DG), 129-130 (NE), R155, D157, and A192 each bind NAD(+).

It belongs to the NAD kinase family. The cofactor is a divalent metal cation.

The protein localises to the cytoplasm. The catalysed reaction is NAD(+) + ATP = ADP + NADP(+) + H(+). Functionally, involved in the regulation of the intracellular balance of NAD and NADP, and is a key enzyme in the biosynthesis of NADP. Catalyzes specifically the phosphorylation on 2'-hydroxyl of the adenosine moiety of NAD to yield NADP. This Geobacillus stearothermophilus (Bacillus stearothermophilus) protein is NAD kinase.